The sequence spans 430 residues: Tol-Pal system protein TolB (430 aa).

Positions 1 to 21 (MKQALRVAFGFLILWASVLHA) are cleaved as a signal peptide.

This sequence belongs to the TolB family. As to quaternary structure, the Tol-Pal system is composed of five core proteins: the inner membrane proteins TolA, TolQ and TolR, the periplasmic protein TolB and the outer membrane protein Pal. They form a network linking the inner and outer membranes and the peptidoglycan layer.

It is found in the periplasm. Functionally, part of the Tol-Pal system, which plays a role in outer membrane invagination during cell division and is important for maintaining outer membrane integrity. TolB occupies a key intermediary position in the Tol-Pal system because it communicates directly with both membrane-embedded components, Pal in the outer membrane and TolA in the inner membrane. The sequence is that of Tol-Pal system protein TolB from Shigella boydii serotype 18 (strain CDC 3083-94 / BS512).